A 215-amino-acid polypeptide reads, in one-letter code: Calmodulin-like protein 5 (215 aa).

A disordered region spans residues 38-61; it reads KNSPPSPSTMLPSPSSSSAPTKRI. Residues 45–57 show a composition bias toward low complexity; sequence STMLPSPSSSSAP. 4 consecutive EF-hand domains span residues 61–96, 97–132, 139–174, and 177–212; these read IDPSELKRVFQMFDKNGDGRITKEELNDSLENLGIY, IPDKDLTQMIHKIDANGDGCVDIDEFESLYSSIVDE, TEEEDMKDAFNVFDQDGDGFITVEELKSVMASLGLK, and KTLDGCKKMIMQVDADGDGRVNYKEFLQMMKGGGFS. Ca(2+) is bound by residues Asp-74, Asn-76, Asp-78, Arg-80, Glu-85, Asp-110, Asn-112, Asp-114, Cys-116, Glu-121, Asp-152, Asp-154, Asp-156, Glu-163, Asp-190, Asp-192, Asp-194, Arg-196, and Glu-201.

It belongs to the calmodulin family.

In terms of biological role, potential calcium sensor. In Arabidopsis thaliana (Mouse-ear cress), this protein is Calmodulin-like protein 5 (CML5).